Consider the following 235-residue polypeptide: Small ribosomal subunit protein uS3 (235 aa).

The KH type-2 domain occupies 39 to 107 (IRTYIENELK…ETHLNIVEVR (69 aa)). The tract at residues 215-235 (SERRAVEGAGDGGGQRRRENA) is disordered.

It belongs to the universal ribosomal protein uS3 family. In terms of assembly, part of the 30S ribosomal subunit. Forms a tight complex with proteins S10 and S14.

Functionally, binds the lower part of the 30S subunit head. Binds mRNA in the 70S ribosome, positioning it for translation. This Chelativorans sp. (strain BNC1) protein is Small ribosomal subunit protein uS3.